Reading from the N-terminus, the 473-residue chain is Adenosylhomocysteinase (473 aa).

Residues Thr-64, Asp-139, and Glu-199 each contribute to the substrate site. 200 to 202 (TTT) contributes to the NAD(+) binding site. Substrate contacts are provided by Lys-229 and Asp-233. Residues Asn-234, 263-268 (GYGDVG), Glu-286, Asn-321, 342-344 (IGH), and Asn-387 contribute to the NAD(+) site.

Belongs to the adenosylhomocysteinase family. NAD(+) is required as a cofactor.

Its subcellular location is the cytoplasm. It catalyses the reaction S-adenosyl-L-homocysteine + H2O = L-homocysteine + adenosine. It participates in amino-acid biosynthesis; L-homocysteine biosynthesis; L-homocysteine from S-adenosyl-L-homocysteine: step 1/1. May play a key role in the regulation of the intracellular concentration of adenosylhomocysteine. The protein is Adenosylhomocysteinase of Paraburkholderia phymatum (strain DSM 17167 / CIP 108236 / LMG 21445 / STM815) (Burkholderia phymatum).